Consider the following 440-residue polypeptide: Tyrosine--tRNA ligase (440 aa).

Residue Tyr46 coordinates L-tyrosine. A 'HIGH' region motif is present at residues 51–60 (PTAASLHIGN). 2 residues coordinate L-tyrosine: Tyr181 and Gln185. Positions 241-245 (KFGKS) match the 'KMSKS' region motif. Lys244 contributes to the ATP binding site. The S4 RNA-binding domain maps to 373–439 (DRVIDAAQAA…GKKALGAVEN (67 aa)).

It belongs to the class-I aminoacyl-tRNA synthetase family. TyrS type 1 subfamily. Homodimer.

It is found in the cytoplasm. The catalysed reaction is tRNA(Tyr) + L-tyrosine + ATP = L-tyrosyl-tRNA(Tyr) + AMP + diphosphate + H(+). Functionally, catalyzes the attachment of tyrosine to tRNA(Tyr) in a two-step reaction: tyrosine is first activated by ATP to form Tyr-AMP and then transferred to the acceptor end of tRNA(Tyr). The protein is Tyrosine--tRNA ligase of Bifidobacterium longum subsp. infantis (strain ATCC 15697 / DSM 20088 / JCM 1222 / NCTC 11817 / S12).